The following is a 208-amino-acid chain: Outer-membrane lipoprotein carrier protein (208 aa).

Positions 1–22 are cleaved as a signal peptide; the sequence is MKKIFAIAALSLPLFSHFPAFA.

This sequence belongs to the LolA family. As to quaternary structure, monomer.

The protein resides in the periplasm. Participates in the translocation of lipoproteins from the inner membrane to the outer membrane. Only forms a complex with a lipoprotein if the residue after the N-terminal Cys is not an aspartate (The Asp acts as a targeting signal to indicate that the lipoprotein should stay in the inner membrane). The protein is Outer-membrane lipoprotein carrier protein of Shewanella halifaxensis (strain HAW-EB4).